We begin with the raw amino-acid sequence, 1430 residues long: 3'-5' RNA helicase YTHDC2 (1430 aa).

Positions 1 to 37 (MSRPSSVSPRQPAPGGGGGGGPSPCGPGGGGRAKGLK) are disordered. Gly residues predominate over residues 14–33 (PGGGGGGGPSPCGPGGGGRA). In terms of domain architecture, R3H spans 38–106 (DIRIDEEVKI…NRYLTVKKKD (69 aa)). Residues 203–369 (VKIIKENKVV…FGSCPVIYIQ (167 aa)) enclose the Helicase ATP-binding domain. Position 216–223 (216–223 (GETGSGKT)) interacts with ATP. Positions 316–319 (DEVH) match the DEAH box motif. ANK repeat units lie at residues 506-538 (TSATALMVAAGRGFASQVEQLISMGANVHSKAS) and 539-571 (NGWMALDWAKHFGQTEIVDLLESYSATLEFGNL). Positions 612-784 (LLYNICHSCD…ELCLHTKLLA (173 aa)) constitute a Helicase C-terminal domain. Phosphoserine occurs at positions 1089, 1090, and 1092. Residues 1164–1174 (EQSAGLQQPSG) show a composition bias toward polar residues. The tract at residues 1164-1288 (EQSAGLQQPS…SPSPRPNMPV (125 aa)) is disordered. A compositionally biased stretch (low complexity) spans 1191 to 1200 (SSWRSNNSRK). Ser1202 is subject to Phosphoserine. Residues 1231 to 1249 (KYKDRGILHPKRGTEDRSD) are compositionally biased toward basic and acidic residues. Over residues 1250-1264 (QSSLKSTDSSSYPSP) the composition is skewed to low complexity. Ser1263, Ser1267, and Ser1281 each carry phosphoserine. The 131-residue stretch at 1288-1418 (VRYFIMKSSN…LVGEQLLQLW (131 aa)) folds into the YTH domain. RNA is bound by residues 1294–1296 (KSS), Trp1310, and Trp1360.

It belongs to the DEAD box helicase family. DEAH subfamily. Interacts with MEIOC; binds transcripts that regulate the mitotic cell cycle inhibiting progression into metaphase, thereby allowing meiotic prophase to proceed normally. Interacts (via ANK repeats) with XRN1. Interacts with ZCCHC4. Associates with the small ribosomal subunit. Interacts with RBM46. Expressed in testis. Not detected in spermatogonia next to the tubule wall but is strongly expressed in spermatocytes, suggesting that it is up-regulated in germ cells upon entry into meiosis.

The protein resides in the cytoplasm. The protein localises to the perinuclear region. The enzyme catalyses ATP + H2O = ADP + phosphate + H(+). 3'-5' RNA helicase that plays a key role in the male and female germline by promoting transition from mitotic to meiotic divisions in stem cells. Specifically recognizes and binds N6-methyladenosine (m6A)-containing RNAs, a modification present at internal sites of mRNAs and some non-coding RNAs that plays a role in the efficiency of RNA processing and stability. Essential for ensuring a successful progression of the meiotic program in the germline by regulating the level of m6A-containing RNAs. Acts by binding and promoting degradation of m6A-containing mRNAs: the 3'-5' RNA helicase activity is required for this process and RNA degradation may be mediated by XRN1 exoribonuclease. Required for both spermatogenesis and oogenesis. In Homo sapiens (Human), this protein is 3'-5' RNA helicase YTHDC2.